A 272-amino-acid chain; its full sequence is GTP cyclohydrolase FolE2 (272 aa).

This sequence belongs to the GTP cyclohydrolase IV family.

The enzyme catalyses GTP + H2O = 7,8-dihydroneopterin 3'-triphosphate + formate + H(+). The protein operates within cofactor biosynthesis; 7,8-dihydroneopterin triphosphate biosynthesis; 7,8-dihydroneopterin triphosphate from GTP: step 1/1. Functionally, converts GTP to 7,8-dihydroneopterin triphosphate. In Aromatoleum aromaticum (strain DSM 19018 / LMG 30748 / EbN1) (Azoarcus sp. (strain EbN1)), this protein is GTP cyclohydrolase FolE2.